The primary structure comprises 167 residues: Peptide deformylase (167 aa).

The Fe cation site is built by Cys-91 and His-133. Glu-134 is an active-site residue. His-137 contacts Fe cation.

The protein belongs to the polypeptide deformylase family. The cofactor is Fe(2+).

It catalyses the reaction N-terminal N-formyl-L-methionyl-[peptide] + H2O = N-terminal L-methionyl-[peptide] + formate. In terms of biological role, removes the formyl group from the N-terminal Met of newly synthesized proteins. Requires at least a dipeptide for an efficient rate of reaction. N-terminal L-methionine is a prerequisite for activity but the enzyme has broad specificity at other positions. In Tolumonas auensis (strain DSM 9187 / NBRC 110442 / TA 4), this protein is Peptide deformylase.